Here is a 1978-residue protein sequence, read N- to C-terminus: Dedicator of cytokinesis protein 4 (1978 aa).

The 62-residue stretch at 6–67 (EHEKYGVVIA…PSSYVHLKNA (62 aa)) folds into the SH3 domain. Phosphotyrosine is present on Y167. The residue at position 193 (T193) is a Phosphothreonine. One can recognise a C2 DOCK-type domain in the interval 401-574 (RNDLYITVER…ESFWITSFLC (174 aa)). The DOCKER domain occupies 1199–1605 (KTELNKEEMY…FGIQEFPACI (407 aa)). S1608, S1616, S1623, S1627, S1629, and S1640 each carry phosphoserine. Disordered stretches follow at residues 1657–1738 (SQAS…IYPT) and 1751–1978 (IGDG…VSQL). Residues 1681 to 1712 (PSPSTSSLSSTHSASPNVTSSAPSSARASPLL) are compositionally biased toward low complexity. Phosphoserine is present on S1778. The short motif at 1797 to 1803 (PPVPPRP) is the SH3-binding element. The segment covering 1804 to 1818 (TQTASPARHTTSVSP) has biased composition (polar residues). Low complexity predominate over residues 1842 to 1872 (SPGLSSNSPVLSGSYSSGISSLSRCSTSETS). A compositionally biased stretch (polar residues) spans 1873 to 1882 (GFENQANEQS). Over residues 1885–1895 (VPVPVPVPVPV) the composition is skewed to pro residues. Residues 1953–1966 (SHLENGTRRTEPGP) are compositionally biased toward basic and acidic residues.

Belongs to the DOCK family. In terms of assembly, interacts with nucleotide-free Rap1; functions as a guanine nucleotide exchange factor (GEF) for Rap1. Interacts (via DOCKER domain) with RAC1; functions as a guanine nucleotide exchange factor (GEF) for RAC1. Interacts with the SH3 domain of CRK. Interacts with FASLG. Interacts with ELMO2 and EPHA2; mediates activation of RAC1 by EPHA2. Interacts with USH1C (via PDZ 1 domain). Expressed in inner ear (at protein level).

It is found in the cell membrane. The protein localises to the cytoplasm. The protein resides in the cytosol. Its function is as follows. Functions as a guanine nucleotide exchange factor (GEF) that promotes the exchange of GDP to GTP, converting inactive GDP-bound small GTPases into their active GTP-bound form. Involved in regulation of adherens junction between cells. Plays a role in cell migration. Has a higher guanine nucleotide exchange factor activity compared to other isoforms. The sequence is that of Dedicator of cytokinesis protein 4 (Dock4) from Mus musculus (Mouse).